The primary structure comprises 141 residues: Nucleoside diphosphate kinase (141 aa).

ATP is bound by residues K11, F59, R87, T93, R104, and N114. Catalysis depends on H117, which acts as the Pros-phosphohistidine intermediate.

This sequence belongs to the NDK family. It depends on Mg(2+) as a cofactor.

Its subcellular location is the cytoplasm. The catalysed reaction is a 2'-deoxyribonucleoside 5'-diphosphate + ATP = a 2'-deoxyribonucleoside 5'-triphosphate + ADP. It carries out the reaction a ribonucleoside 5'-diphosphate + ATP = a ribonucleoside 5'-triphosphate + ADP. In terms of biological role, major role in the synthesis of nucleoside triphosphates other than ATP. The ATP gamma phosphate is transferred to the NDP beta phosphate via a ping-pong mechanism, using a phosphorylated active-site intermediate. This is Nucleoside diphosphate kinase from Staphylothermus marinus (strain ATCC 43588 / DSM 3639 / JCM 9404 / F1).